The following is a 1381-amino-acid chain: Hepatocyte growth factor receptor (1381 aa).

A signal peptide spans 1-24 (MKAPAVLAPGILMLLFTLVQRSNG). The Extracellular segment spans residues 25 to 932 (ECKEALAKSE…VIVQPDQNFT (908 aa)). The 489-residue stretch at 27 to 515 (KEALAKSEMN…TGKKITKIPL (489 aa)) folds into the Sema domain. Asparagine 45 carries an N-linked (GlcNAc...) asparagine glycan. Disulfide bonds link cysteine 95–cysteine 101, cysteine 98–cysteine 160, cysteine 133–cysteine 141, and cysteine 172–cysteine 175. N-linked (GlcNAc...) asparagine glycosylation is present at asparagine 106. A glycan (N-linked (GlcNAc...) asparagine) is linked at asparagine 149. An N-linked (GlcNAc...) asparagine glycan is attached at asparagine 202. 2 cysteine pairs are disulfide-bonded: cysteine 298–cysteine 363 and cysteine 385–cysteine 397. N-linked (GlcNAc...) asparagine glycosylation is found at asparagine 399 and asparagine 405. 4 disulfides stabilise this stretch: cysteine 520-cysteine 538, cysteine 526-cysteine 561, cysteine 529-cysteine 545, and cysteine 541-cysteine 551. IPT/TIG domains lie at 563 to 655 (PAIY…FSYV), 657 to 739 (PIIT…FSYR), and 742 to 836 (PIVY…LIYV). Threonine 582 carries an O-linked (Man) threonine glycan. Asparagine 607 and asparagine 635 each carry an N-linked (GlcNAc...) asparagine glycan. O-linked (Man) threonine glycans are attached at residues threonine 676 and threonine 761. N-linked (GlcNAc...) asparagine glycosylation is found at asparagine 785, asparagine 879, and asparagine 930. Residues 933 to 955 (GLIAGVVSISIALLLLLGLFLWL) traverse the membrane as a helical segment. Over 956 to 1381 (KKRKQIKDLG…EDNADDEVDT (426 aa)) the chain is Cytoplasmic. Serine 966 carries the post-translational modification Phosphoserine. Threonine 977 carries the phosphothreonine modification. Residues serine 990, serine 997, and serine 1000 each carry the phosphoserine modification. Phosphotyrosine is present on tyrosine 1003. The 268-residue stretch at 1078-1345 (VHFNEVIGRG…RISAIFSTFI (268 aa)) folds into the Protein kinase domain. Residues 1084–1092 (IGRGHFGCV) and lysine 1110 contribute to the ATP site. The Proton acceptor role is filled by aspartate 1204. The tract at residues 1212–1381 (LDEKFTVKVA…EDNADDEVDT (170 aa)) is interaction with RANBP9. Residue tyrosine 1230 is modified to Phosphotyrosine. Tyrosine 1234 and tyrosine 1235 each carry phosphotyrosine; by autocatalysis. Threonine 1289 carries the phosphothreonine modification. Positions 1320–1359 (WHPKAEMRPSFSELVSRISAIFSTFIGEHYVHVNATYVNV) are interaction with MUC20. Phosphotyrosine; by autocatalysis is present on residues tyrosine 1349 and tyrosine 1356. The residue at position 1365 (tyrosine 1365) is a Phosphotyrosine.

Belongs to the protein kinase superfamily. Tyr protein kinase family. Heterodimer made of an alpha chain (50 kDa) and a beta chain (145 kDa) which are disulfide linked. Binds PLXNB1. Interacts when phosphorylated with downstream effectors including STAT3, PIK3R1, SRC, PCLG1, GRB2 and GAB1. Interacts with SPSB1, SPSB2 and SPSB4. Interacts with INPP5D/SHIP1. When phosphorylated at Tyr-1356, interacts with INPPL1/SHIP2. Interacts with RANBP9 and RANBP10, as well as SPSB1, SPSB2, SPSB3 and SPSB4. SPSB1 binding occurs in the presence and in the absence of HGF, however HGF treatment has a positive effect on this interaction. Interacts with MUC20; prevents interaction with GRB2 and suppresses hepatocyte growth factor-induced cell proliferation. Interacts with GRB10. Interacts with PTPN1 and PTPN2. Interacts with HSP90AA1 and HSP90AB1; the interaction suppresses MET kinase activity. Interacts with tensin TNS3. Interacts (when phosphorylated) with tensin TNS4 (via SH2 domain); the interaction increases MET protein stability by inhibiting MET endocytosis and subsequent lysosomal degradation. In terms of assembly, (Microbial infection) Immunoprecipitates with L.monocytogenes InlB. InlB probably dimerizes upon binding to MET, which encourages subsequent dimerization of MET. In terms of processing, autophosphorylated in response to ligand binding on Tyr-1234 and Tyr-1235 in the kinase domain leading to further phosphorylation of Tyr-1349 and Tyr-1356 in the C-terminal multifunctional docking site. Dephosphorylated by PTPRJ at Tyr-1349 and Tyr-1365. Dephosphorylated by PTPN1 and PTPN2. Ubiquitinated. Ubiquitination by CBL regulates the receptor stability and activity through proteasomal degradation. Post-translationally, O-mannosylation of IPT/TIG domains by TMEM260 is required for protein maturation. O-mannosylated residues are composed of single mannose glycans that are not elongated or modified. In terms of processing, (Microbial infection) Tyrosine phosphorylation is stimulated by L.monocytogenes InlB.

The protein localises to the membrane. It carries out the reaction L-tyrosyl-[protein] + ATP = O-phospho-L-tyrosyl-[protein] + ADP + H(+). Its activity is regulated as follows. In its inactive state, the C-terminal tail interacts with the catalytic domain and inhibits the kinase activity. Upon ligand binding, the C-terminal tail is displaced and becomes phosphorylated, thus increasing the kinase activity. Functionally, receptor tyrosine kinase that transduces signals from the extracellular matrix into the cytoplasm by binding to hepatocyte growth factor/HGF ligand. Regulates many physiological processes including proliferation, scattering, morphogenesis and survival. Ligand binding at the cell surface induces autophosphorylation of MET on its intracellular domain that provides docking sites for downstream signaling molecules. Following activation by ligand, interacts with the PI3-kinase subunit PIK3R1, PLCG1, SRC, GRB2, STAT3 or the adapter GAB1. Recruitment of these downstream effectors by MET leads to the activation of several signaling cascades including the RAS-ERK, PI3 kinase-AKT, or PLCgamma-PKC. The RAS-ERK activation is associated with the morphogenetic effects while PI3K/AKT coordinates prosurvival effects. During embryonic development, MET signaling plays a role in gastrulation, development and migration of muscles and neuronal precursors, angiogenesis and kidney formation. In adults, participates in wound healing as well as organ regeneration and tissue remodeling. Also promotes differentiation and proliferation of hematopoietic cells. (Microbial infection) Acts as a receptor for Listeria monocytogenes internalin InlB, mediating entry of the pathogen into cells. This Chlorocebus aethiops (Green monkey) protein is Hepatocyte growth factor receptor (MET).